Reading from the N-terminus, the 358-residue chain is Putative hydrogenase expression/formation protein MJ0993 (358 aa).

Fe cation contacts are provided by cysteine 33, cysteine 61, and cysteine 64.

Belongs to the HypD family.

This is Putative hydrogenase expression/formation protein MJ0993 from Methanocaldococcus jannaschii (strain ATCC 43067 / DSM 2661 / JAL-1 / JCM 10045 / NBRC 100440) (Methanococcus jannaschii).